We begin with the raw amino-acid sequence, 383 residues long: MQNRHHARLLPSSALLSHEAAAGVMLMAASAIGMVFANSIWQASYEYWLNIETGPLTMRGWINDALMALFFLLAGLEIKREILYGHLSHWSQRLLPGVAAIGGMVVPAIIYVAFNHSGEALRGWAIPTATDIAFALGVLALAGSRVPGILKVFLTALAIVDDLGAVIVIALFYTGTLSVLPGAGVAAILGLLLMLNRQGVRTLFPYLLAGVPLWWLTLKSGIHPTVAGVGLALLIPAGHDEASPLMRLEHMLSWPVRFVILPLFGFANAGISLHGVTVGQMLSPLTLGVGAALMLGKPLGVLGAVSILQLSGASGFPPYITWRHRIGIAFLCGIGFTMSLFIAILAFPGTAAVNQIKLGILSGSMLSGLCGYILLRGPAVADR.

11 helical membrane-spanning segments follow: residues 21 to 41 (AAGV…NSIW), 56 to 76 (LTMR…LAGL), 94 to 114 (LLPG…YVAF), 123 to 143 (GWAI…ALAG), 152 to 172 (VFLT…IALF), 175 to 195 (GTLS…LLML), 202 to 222 (TLFP…KSGI), 258 to 278 (FVIL…GVTV), 287 to 307 (LGVG…AVSI), 326 to 346 (IGIA…AILA), and 355 to 375 (QIKL…YILL).

The protein belongs to the NhaA Na(+)/H(+) (TC 2.A.33) antiporter family.

It localises to the cell inner membrane. The enzyme catalyses Na(+)(in) + 2 H(+)(out) = Na(+)(out) + 2 H(+)(in). In terms of biological role, na(+)/H(+) antiporter that extrudes sodium in exchange for external protons. The protein is Na(+)/H(+) antiporter NhaA of Granulibacter bethesdensis (strain ATCC BAA-1260 / CGDNIH1).